A 493-amino-acid polypeptide reads, in one-letter code: MAFYSAVEAVLGVTWLSALFTLGSLSVFWLLRHRERKSQHALHNAWAQISAFDPSSLDRSKTADDWKTTRLGKATLVSNRYAHEIRNDERLSFQLGLEQDFLTTVPGLESLFGGTFHNGIVWDAAMHFSRKLNTVVDPLSEETIEYLQKNWGDDKEWHTVPLHHSMLMLIAQLTARLFIGEELCRDPEWLGIATGYTMDRTFAVKELQQWNPRLIPVVHWFLPSCRKLRATIKKARGFVDRVRTERKQKKTTADDTNRVDAMTWIDSVARDQNCSYDATLTQLRLAYAAVHTTGDMMTKVVAALCENPEMIEPLRKEIISIISEHGWREAALHKMTLLDSVLKESQRIQPLGLYTLSRIALEPITLDDGTQIKKGEQVKISTDHMWNSSIWPDAAQFDGYRFQRFRDNPDQSSAVSFVSLSANHMGFGYGKHACPGRFLAAIEAKVALCHLLLKYDFELENKEASAAQTEGVMIWRDHRAQLRIKRRVEKIEW.

A helical membrane pass occupies residues 10 to 30 (VLGVTWLSALFTLGSLSVFWL). A heme-binding site is contributed by Cys434.

It belongs to the cytochrome P450 family. The cofactor is heme.

It is found in the membrane. Its pathway is secondary metabolite biosynthesis; terpenoid biosynthesis. Cytochrome P450 monooxygenasee; part of the cluster that mediates the biosynthesis of shearones, diterpenoid pyrones (DPs) which are structurally diverse meroterpenoids consisting of a diterpene linked by a pyrone, and which may exhibit a range of bioactivities. Whitin the pathway, esdpG takes part in the molecular scaffold modification via the hydroxylation at C-11 and C-12 and can transform shearone A into shearone C and shearone B into shearone D. The molecular scaffold is commonly biosynthesized by a series of enzymes including the non-reducing polyketide synthase (NR-PKS) esdpA that generates an alpha-pyrone; the prenyltransferase esdpC that attaches a geranylgeranyl pyrophosphate (GGPP) produced by the GGPP synthase (GGPPS) esdpD onto the pyrone unit; the FAD-dependent monooxygenase esdpE that converts an olefin on the diterpene unit into an epoxide; and the terpene cyclase esdpB that catalyzes the cyclization reactions to give the molecular backbone shearone A. In the modification steps, esdpF oxidizes the hydroxy group to a ketone at C-3 and esdpG then attaches hydroxy groups at both C-11 and C-12. After that, esdpI hydroxylates at C-20 and esdpH hydroxylates at C-6'. The ether bridge is generated by nucleophilic attack of the hydroxy group at C-20 to the carbonyl carbon at C-3. EsdpH can also functions prior to esdpI. The different combinations of these modification enzymes lead to the production of diverse shearone derivatives, shearone I being the end product of the pathway. The alpha-ketoglutarate-dependent dioxygenase esdpJ seems not to be involved in this pathway. The polypeptide is Cytochrome P450 monooxygenase esdpG (Penicillium shearii (Eupenicillium shearii)).